A 447-amino-acid chain; its full sequence is Dihydroorotase (447 aa).

Zn(2+) contacts are provided by histidine 84 and histidine 86. Substrate is bound by residues 86–88 and asparagine 118; that span reads HLR. Residues aspartate 174, histidine 201, and histidine 255 each coordinate Zn(2+). Residue asparagine 301 participates in substrate binding. Residue aspartate 328 participates in Zn(2+) binding. The active site involves aspartate 328. Substrate contacts are provided by residues histidine 332 and 346–347; that span reads FG.

It belongs to the metallo-dependent hydrolases superfamily. DHOase family. Class I DHOase subfamily. It depends on Zn(2+) as a cofactor.

It carries out the reaction (S)-dihydroorotate + H2O = N-carbamoyl-L-aspartate + H(+). It functions in the pathway pyrimidine metabolism; UMP biosynthesis via de novo pathway; (S)-dihydroorotate from bicarbonate: step 3/3. Catalyzes the reversible cyclization of carbamoyl aspartate to dihydroorotate. In Anaplasma phagocytophilum (strain HZ), this protein is Dihydroorotase.